Reading from the N-terminus, the 298-residue chain is Homoserine kinase (298 aa).

Position 83–93 (83–93 (PISRGLGSSSS)) interacts with ATP.

The protein belongs to the GHMP kinase family. Homoserine kinase subfamily.

The protein resides in the cytoplasm. The enzyme catalyses L-homoserine + ATP = O-phospho-L-homoserine + ADP + H(+). The protein operates within amino-acid biosynthesis; L-threonine biosynthesis; L-threonine from L-aspartate: step 4/5. Its function is as follows. Catalyzes the ATP-dependent phosphorylation of L-homoserine to L-homoserine phosphate. The sequence is that of Homoserine kinase from Clostridium botulinum (strain Alaska E43 / Type E3).